A 454-amino-acid polypeptide reads, in one-letter code: Methylenetetrahydrofolate--tRNA-(uracil-5-)-methyltransferase TrmFO (454 aa).

Glycine 9–glycine 14 serves as a coordination point for FAD. A disordered region spans residues leucine 432–alanine 454.

It belongs to the MnmG family. TrmFO subfamily. FAD serves as cofactor.

It is found in the cytoplasm. The enzyme catalyses uridine(54) in tRNA + (6R)-5,10-methylene-5,6,7,8-tetrahydrofolate + NADH + H(+) = 5-methyluridine(54) in tRNA + (6S)-5,6,7,8-tetrahydrofolate + NAD(+). It catalyses the reaction uridine(54) in tRNA + (6R)-5,10-methylene-5,6,7,8-tetrahydrofolate + NADPH + H(+) = 5-methyluridine(54) in tRNA + (6S)-5,6,7,8-tetrahydrofolate + NADP(+). Its function is as follows. Catalyzes the folate-dependent formation of 5-methyl-uridine at position 54 (M-5-U54) in all tRNAs. This is Methylenetetrahydrofolate--tRNA-(uracil-5-)-methyltransferase TrmFO from Pelobacter propionicus (strain DSM 2379 / NBRC 103807 / OttBd1).